Here is a 111-residue protein sequence, read N- to C-terminus: Cytochrome c (111 aa).

A1 bears the N-acetylalanine mark. Heme c is bound by residues C22, C25, and H26. An N6,N6,N6-trimethyllysine modification is found at K80. Residue M88 participates in heme c binding. Position 94 is an N6,N6,N6-trimethyllysine (K94).

It belongs to the cytochrome c family. Binds 1 heme c group covalently per subunit.

It localises to the mitochondrion intermembrane space. Its function is as follows. Electron carrier protein. The oxidized form of the cytochrome c heme group can accept an electron from the heme group of the cytochrome c1 subunit of cytochrome reductase. Cytochrome c then transfers this electron to the cytochrome oxidase complex, the final protein carrier in the mitochondrial electron-transport chain. The chain is Cytochrome c from Cannabis sativa (Hemp).